The primary structure comprises 190 residues: Potassium-transporting ATPase KdpC subunit (190 aa).

The helical transmembrane segment at 10 to 30 (TFIFLLLITGGVYPLLTTVLG) threads the bilayer.

Belongs to the KdpC family. The system is composed of three essential subunits: KdpA, KdpB and KdpC.

It is found in the cell inner membrane. In terms of biological role, part of the high-affinity ATP-driven potassium transport (or Kdp) system, which catalyzes the hydrolysis of ATP coupled with the electrogenic transport of potassium into the cytoplasm. This subunit acts as a catalytic chaperone that increases the ATP-binding affinity of the ATP-hydrolyzing subunit KdpB by the formation of a transient KdpB/KdpC/ATP ternary complex. The polypeptide is Potassium-transporting ATPase KdpC subunit (Escherichia coli (strain K12 / MC4100 / BW2952)).